Consider the following 220-residue polypeptide: 7-cyano-7-deazaguanine synthase (220 aa).

10–20 (FSGGQDSTTCL) provides a ligand contact to ATP. Residues Cys-186, Cys-195, Cys-198, and Cys-201 each contribute to the Zn(2+) site.

It belongs to the QueC family. In terms of assembly, homodimer. Zn(2+) serves as cofactor.

It catalyses the reaction 7-carboxy-7-deazaguanine + NH4(+) + ATP = 7-cyano-7-deazaguanine + ADP + phosphate + H2O + H(+). It functions in the pathway purine metabolism; 7-cyano-7-deazaguanine biosynthesis. Its function is as follows. Catalyzes the ATP-dependent conversion of 7-carboxy-7-deazaguanine (CDG) to 7-cyano-7-deazaguanine (preQ(0)). The chain is 7-cyano-7-deazaguanine synthase from Bacillus mycoides (strain KBAB4) (Bacillus weihenstephanensis).